The following is a 283-amino-acid chain: Bifunctional protein FolD (283 aa).

NADP(+) is bound by residues 165-167 (GRS) and serine 190.

The protein belongs to the tetrahydrofolate dehydrogenase/cyclohydrolase family. Homodimer.

It catalyses the reaction (6R)-5,10-methylene-5,6,7,8-tetrahydrofolate + NADP(+) = (6R)-5,10-methenyltetrahydrofolate + NADPH. It carries out the reaction (6R)-5,10-methenyltetrahydrofolate + H2O = (6R)-10-formyltetrahydrofolate + H(+). The protein operates within one-carbon metabolism; tetrahydrofolate interconversion. Functionally, catalyzes the oxidation of 5,10-methylenetetrahydrofolate to 5,10-methenyltetrahydrofolate and then the hydrolysis of 5,10-methenyltetrahydrofolate to 10-formyltetrahydrofolate. The sequence is that of Bifunctional protein FolD from Variovorax paradoxus (strain S110).